The chain runs to 343 residues: Phosphate acyltransferase (343 aa).

The protein belongs to the PlsX family. Homodimer. Probably interacts with PlsY.

The protein resides in the cytoplasm. The catalysed reaction is a fatty acyl-[ACP] + phosphate = an acyl phosphate + holo-[ACP]. It functions in the pathway lipid metabolism; phospholipid metabolism. In terms of biological role, catalyzes the reversible formation of acyl-phosphate (acyl-PO(4)) from acyl-[acyl-carrier-protein] (acyl-ACP). This enzyme utilizes acyl-ACP as fatty acyl donor, but not acyl-CoA. The sequence is that of Phosphate acyltransferase from Haemophilus ducreyi (strain 35000HP / ATCC 700724).